The following is a 95-amino-acid chain: UPF0213 protein YPA_2977 (95 aa).

Residues 4–79 (SLWHLYLLRT…KQLSKQQKEK (76 aa)) enclose the GIY-YIG domain.

Belongs to the UPF0213 family.

This Yersinia pestis bv. Antiqua (strain Antiqua) protein is UPF0213 protein YPA_2977.